Consider the following 444-residue polypeptide: Putative zinc metalloprotease PD_0327 (444 aa).

Histidine 22 contributes to the Zn(2+) binding site. The active site involves glutamate 23. Histidine 26 contacts Zn(2+). A helical transmembrane segment spans residues isoleucine 98 to phenylalanine 120. A PDZ domain is found at threonine 192–glycine 278. 2 consecutive transmembrane segments (helical) span residues valine 371 to isoleucine 393 and alanine 418 to asparagine 440.

It belongs to the peptidase M50B family. Zn(2+) is required as a cofactor.

Its subcellular location is the cell inner membrane. The protein is Putative zinc metalloprotease PD_0327 of Xylella fastidiosa (strain Temecula1 / ATCC 700964).